A 291-amino-acid polypeptide reads, in one-letter code: N-acetylmannosamine kinase (291 aa).

ATP-binding positions include 5 to 12 (AIDIGGTK) and 132 to 139 (GVGGGVVC). Zn(2+) is bound by residues H156, C166, C168, and C173.

The protein belongs to the ROK (NagC/XylR) family. NanK subfamily. As to quaternary structure, homodimer.

It carries out the reaction an N-acyl-D-mannosamine + ATP = an N-acyl-D-mannosamine 6-phosphate + ADP + H(+). It functions in the pathway amino-sugar metabolism; N-acetylneuraminate degradation; D-fructose 6-phosphate from N-acetylneuraminate: step 2/5. Its function is as follows. Catalyzes the phosphorylation of N-acetylmannosamine (ManNAc) to ManNAc-6-P. This is N-acetylmannosamine kinase from Salmonella arizonae (strain ATCC BAA-731 / CDC346-86 / RSK2980).